Reading from the N-terminus, the 115-residue chain is U31-theraphotoxin-Cg1a (115 aa).

The first 18 residues, 1–18 (MKLCVIIIASLMVASVSG), serve as a signal peptide directing secretion. A propeptide spanning residues 19–51 (RLRKIKGTELDKKMLLEKLGHGMDIRFEETPRA) is cleaved from the precursor. 4 disulfides stabilise this stretch: cysteine 52-cysteine 67, cysteine 60-cysteine 73, cysteine 64-cysteine 113, and cysteine 66-cysteine 86.

It belongs to the neurotoxin 03 (Tx2) family. 02 subfamily. Expressed by the venom gland.

It is found in the secreted. Functionally, probable ion channel inhibitor. The protein is U31-theraphotoxin-Cg1a of Chilobrachys guangxiensis (Chinese earth tiger tarantula).